The sequence spans 278 residues: 4-deoxy-L-threo-5-hexosulose-uronate ketol-isomerase (278 aa).

Zn(2+) contacts are provided by His-196, His-198, Glu-203, and His-245.

It belongs to the KduI family. It depends on Zn(2+) as a cofactor.

It catalyses the reaction 5-dehydro-4-deoxy-D-glucuronate = 3-deoxy-D-glycero-2,5-hexodiulosonate. It participates in glycan metabolism; pectin degradation; 2-dehydro-3-deoxy-D-gluconate from pectin: step 4/5. Functionally, catalyzes the isomerization of 5-dehydro-4-deoxy-D-glucuronate to 3-deoxy-D-glycero-2,5-hexodiulosonate. The protein is 4-deoxy-L-threo-5-hexosulose-uronate ketol-isomerase of Shigella flexneri serotype 5b (strain 8401).